The primary structure comprises 166 residues: Large ribosomal subunit protein uL10 (166 aa).

It belongs to the universal ribosomal protein uL10 family. As to quaternary structure, part of the ribosomal stalk of the 50S ribosomal subunit. The N-terminus interacts with L11 and the large rRNA to form the base of the stalk. The C-terminus forms an elongated spine to which L12 dimers bind in a sequential fashion forming a multimeric L10(L12)X complex.

In terms of biological role, forms part of the ribosomal stalk, playing a central role in the interaction of the ribosome with GTP-bound translation factors. This is Large ribosomal subunit protein uL10 from Pelagibacter ubique (strain HTCC1062).